The following is a 298-amino-acid chain: Interferon-inducible double-stranded RNA-dependent protein kinase activator A homolog B (298 aa).

DRBM domains follow at residues 20–87, 112–180, and 225–293; these read TPIQ…ILRG, NPVG…KFKT, and DYVK…YLKI.

The protein belongs to the PRKRA family. In terms of assembly, homodimer. Interacts with dicer1 and eif2ak2/pkr. Also able to interact with dsRNA. Associates with ribosomes. In terms of tissue distribution, expressed in brain, heart, kidney, liver, nerve and spleen.

The protein localises to the cytoplasm. It localises to the perinuclear region. The protein resides in the nucleus. Its subcellular location is the nucleolus. In terms of biological role, activates eif2ak2/pkr in the absence of double-stranded RNA (dsRNA), leading to phosphorylation of eif2s1/efi2-alpha and inhibition of translation and induction of apoptosis. Required for siRNA production by dicer1 and for subsequent siRNA-mediated post-transcriptional gene silencing. Does not seem to be required for processing of pre-miRNA to miRNA by dicer1. The protein is Interferon-inducible double-stranded RNA-dependent protein kinase activator A homolog B (prkra-b) of Xenopus laevis (African clawed frog).